A 385-amino-acid chain; its full sequence is Glutamate 5-kinase (385 aa).

Position 18 (Lys-18) interacts with ATP. Substrate-binding residues include Ser-57, Asp-144, and Asn-156. Position 218 to 224 (218 to 224 (TGGMKSK)) interacts with ATP. Residues 283-361 (RGVLSIDAGA…SRIEQVLGHK (79 aa)) enclose the PUA domain.

This sequence belongs to the glutamate 5-kinase family.

It is found in the cytoplasm. It carries out the reaction L-glutamate + ATP = L-glutamyl 5-phosphate + ADP. The protein operates within amino-acid biosynthesis; L-proline biosynthesis; L-glutamate 5-semialdehyde from L-glutamate: step 1/2. In terms of biological role, catalyzes the transfer of a phosphate group to glutamate to form L-glutamate 5-phosphate. This Syntrophus aciditrophicus (strain SB) protein is Glutamate 5-kinase.